A 938-amino-acid chain; its full sequence is Isoleucine--tRNA ligase (938 aa).

Residues 58-68 carry the 'HIGH' region motif; that stretch reads PYANGSIHIGH. Lys183 is modified (N6-acetyllysine). Glu561 is an L-isoleucyl-5'-AMP binding site. Positions 602–606 match the 'KMSKS' region motif; the sequence is KMSKS. Position 605 (Lys605) interacts with ATP. 4 residues coordinate Zn(2+): Cys901, Cys904, Cys921, and Cys924.

It belongs to the class-I aminoacyl-tRNA synthetase family. IleS type 1 subfamily. Monomer. Zn(2+) serves as cofactor.

The protein resides in the cytoplasm. It carries out the reaction tRNA(Ile) + L-isoleucine + ATP = L-isoleucyl-tRNA(Ile) + AMP + diphosphate. In terms of biological role, catalyzes the attachment of isoleucine to tRNA(Ile). As IleRS can inadvertently accommodate and process structurally similar amino acids such as valine, to avoid such errors it has two additional distinct tRNA(Ile)-dependent editing activities. One activity is designated as 'pretransfer' editing and involves the hydrolysis of activated Val-AMP. The other activity is designated 'posttransfer' editing and involves deacylation of mischarged Val-tRNA(Ile). In Escherichia coli O7:K1 (strain IAI39 / ExPEC), this protein is Isoleucine--tRNA ligase.